A 332-amino-acid chain; its full sequence is Geranylgeranyl diphosphate synthase (332 aa).

Positions 45, 48, and 77 each coordinate isopentenyl diphosphate. Asp-84 and Asp-88 together coordinate Mg(2+). Arg-93 contacts an all-trans-polyprenyl diphosphate. Arg-94 contacts isopentenyl diphosphate. Residues Lys-177, Thr-178, Gln-215, Lys-232, and Lys-242 each coordinate an all-trans-polyprenyl diphosphate.

The protein belongs to the FPP/GGPP synthase family. Mg(2+) is required as a cofactor.

It carries out the reaction isopentenyl diphosphate + (2E,6E)-farnesyl diphosphate = (2E,6E,10E)-geranylgeranyl diphosphate + diphosphate. Its pathway is isoprenoid biosynthesis; geranylgeranyl diphosphate biosynthesis; geranylgeranyl diphosphate from farnesyl diphosphate and isopentenyl diphosphate: step 1/1. Functionally, catalyzes the condensation of isopentenyl pyrophosphate with the allylic pyrophosphates to yield geranylgeranyl diphosphate (GGPP) which is a precursor of the ether-linked lipids. The sequence is that of Geranylgeranyl diphosphate synthase (gds) from Saccharolobus solfataricus (strain ATCC 35092 / DSM 1617 / JCM 11322 / P2) (Sulfolobus solfataricus).